The primary structure comprises 169 residues: Protein-export protein SecB (169 aa).

It belongs to the SecB family. In terms of assembly, homotetramer, a dimer of dimers. One homotetramer interacts with 1 SecA dimer.

Its subcellular location is the cytoplasm. Its function is as follows. One of the proteins required for the normal export of preproteins out of the cell cytoplasm. It is a molecular chaperone that binds to a subset of precursor proteins, maintaining them in a translocation-competent state. It also specifically binds to its receptor SecA. In Haemophilus influenzae (strain PittEE), this protein is Protein-export protein SecB.